The chain runs to 820 residues: Phenylalanine--tRNA ligase beta subunit (820 aa).

Positions 42-154 (KGGLEGLVIG…EDAVPGTLAK (113 aa)) constitute a tRNA-binding domain. The B5 domain occupies 413-489 (AQDFIVELTY…RIYGYNNVEI (77 aa)). Asp467, Asp473, Glu476, and Asp477 together coordinate Mg(2+). Positions 727–820 (SKFPAVKRDL…LEDKLGAKLR (94 aa)) constitute an FDX-ACB domain.

This sequence belongs to the phenylalanyl-tRNA synthetase beta subunit family. Type 1 subfamily. Tetramer of two alpha and two beta subunits. It depends on Mg(2+) as a cofactor.

The protein resides in the cytoplasm. It carries out the reaction tRNA(Phe) + L-phenylalanine + ATP = L-phenylalanyl-tRNA(Phe) + AMP + diphosphate + H(+). The chain is Phenylalanine--tRNA ligase beta subunit from Bacteroides fragilis (strain YCH46).